A 148-amino-acid polypeptide reads, in one-letter code: Hemoglobin subunit beta-1 (148 aa).

Residues 3–148 (EWTDAERTAI…VVSALCRQYH (146 aa)) enclose the Globin domain. Heme b-binding residues include His64 and His93.

Heterotetramer of two alpha chains and two beta chains. In terms of tissue distribution, red blood cells.

Involved in oxygen transport from gills to the various peripheral tissues. The protein is Hemoglobin subunit beta-1 (ba1) of Danio rerio (Zebrafish).